We begin with the raw amino-acid sequence, 190 residues long: UPF0301 protein Psyr_0485 (190 aa).

This sequence belongs to the UPF0301 (AlgH) family.

The polypeptide is UPF0301 protein Psyr_0485 (Pseudomonas syringae pv. syringae (strain B728a)).